A 328-amino-acid chain; its full sequence is Phosphatidylglycerol--prolipoprotein diacylglyceryl transferase (328 aa).

Transmembrane regions (helical) follow at residues 15-35 (VIQGIPITWYSLSYIFIILIS), 58-78 (FMFSLVLGAILGGRLASTLVY), and 106-126 (GMAIHGGFLGAIIAPLIIINT). Arginine 156 is an a 1,2-diacyl-sn-glycero-3-phospho-(1'-sn-glycerol) binding site. The next 2 membrane-spanning stretches (helical) occupy residues 242 to 262 (GFIFGIYVMLYAFFRFFIEYL) and 289 to 309 (ISMGQILSLVLMFSGLIWVVV).

The protein belongs to the Lgt family.

The protein localises to the cell inner membrane. The enzyme catalyses L-cysteinyl-[prolipoprotein] + a 1,2-diacyl-sn-glycero-3-phospho-(1'-sn-glycerol) = an S-1,2-diacyl-sn-glyceryl-L-cysteinyl-[prolipoprotein] + sn-glycerol 1-phosphate + H(+). Its pathway is protein modification; lipoprotein biosynthesis (diacylglyceryl transfer). In terms of biological role, catalyzes the transfer of the diacylglyceryl group from phosphatidylglycerol to the sulfhydryl group of the N-terminal cysteine of a prolipoprotein, the first step in the formation of mature lipoproteins. The protein is Phosphatidylglycerol--prolipoprotein diacylglyceryl transferase of Borrelia garinii subsp. bavariensis (strain ATCC BAA-2496 / DSM 23469 / PBi) (Borreliella bavariensis).